Consider the following 426-residue polypeptide: Arrestin domain-containing protein 17 (426 aa).

Positions 320-329 (QSAGNGSLPK) are enriched in polar residues. The interval 320–340 (QSAGNGSLPKSSIKDSPPKWD) is disordered. Basic and acidic residues predominate over residues 331 to 340 (SIKDSPPKWD).

It belongs to the arrestin family. Interacts with tax-6. In terms of processing, phosphorylated. Dephosphorylated by tax-6 in vitro. As to expression, expressed from the comma stage to adulthood in the nervous system, including sensory neurons and interneurons posterior to the nerve ring, dorsal and ventral nerve cords, tail ganglia and, CEP, HSN, ASK, ADL, ASH and ASJ neurons.

Functionally, involved in several behavioral responses including chemotaxis towards lysine and adaptation to repeated osmotic stress. In addition, plays a role in resuming egg-laying and locomotion after starvation. The sequence is that of Arrestin domain-containing protein 17 from Caenorhabditis elegans.